We begin with the raw amino-acid sequence, 83 residues long: ATP synthase subunit c (83 aa).

The next 2 membrane-spanning stretches (helical) occupy residues 10-30 and 52-72; these read IAVA…FGLL and MFIV…IALF.

This sequence belongs to the ATPase C chain family. F-type ATPases have 2 components, F(1) - the catalytic core - and F(0) - the membrane proton channel. F(1) has five subunits: alpha(3), beta(3), gamma(1), delta(1), epsilon(1). F(0) has three main subunits: a(1), b(2) and c(10-14). The alpha and beta chains form an alternating ring which encloses part of the gamma chain. F(1) is attached to F(0) by a central stalk formed by the gamma and epsilon chains, while a peripheral stalk is formed by the delta and b chains.

The protein resides in the cell inner membrane. Its function is as follows. F(1)F(0) ATP synthase produces ATP from ADP in the presence of a proton or sodium gradient. F-type ATPases consist of two structural domains, F(1) containing the extramembraneous catalytic core and F(0) containing the membrane proton channel, linked together by a central stalk and a peripheral stalk. During catalysis, ATP synthesis in the catalytic domain of F(1) is coupled via a rotary mechanism of the central stalk subunits to proton translocation. Functionally, key component of the F(0) channel; it plays a direct role in translocation across the membrane. A homomeric c-ring of between 10-14 subunits forms the central stalk rotor element with the F(1) delta and epsilon subunits. The polypeptide is ATP synthase subunit c (Shewanella loihica (strain ATCC BAA-1088 / PV-4)).